Reading from the N-terminus, the 467-residue chain is UDP-N-acetylmuramate--L-alanine ligase (467 aa).

112 to 118 (GTHGKTT) provides a ligand contact to ATP.

Belongs to the MurCDEF family.

Its subcellular location is the cytoplasm. It catalyses the reaction UDP-N-acetyl-alpha-D-muramate + L-alanine + ATP = UDP-N-acetyl-alpha-D-muramoyl-L-alanine + ADP + phosphate + H(+). It functions in the pathway cell wall biogenesis; peptidoglycan biosynthesis. Its function is as follows. Cell wall formation. This is UDP-N-acetylmuramate--L-alanine ligase from Polaromonas sp. (strain JS666 / ATCC BAA-500).